The chain runs to 191 residues: Small ribosomal subunit protein uS9c (191 aa).

Residues 166–191 (TQDSRVKERRKYGLKKARKASQYHKR) are disordered. The span at 172–191 (KERRKYGLKKARKASQYHKR) shows a compositional bias: basic residues.

The protein belongs to the universal ribosomal protein uS9 family.

Its subcellular location is the plastid. It localises to the chloroplast. This chain is Small ribosomal subunit protein uS9c (rps9), found in Chlamydomonas reinhardtii (Chlamydomonas smithii).